The chain runs to 771 residues: Polyribonucleotide nucleotidyltransferase (771 aa).

Residues D487 and D493 each contribute to the Mg(2+) site. In terms of domain architecture, KH spans P554–I613. Residues G623 to R691 enclose the S1 motif domain. A disordered region spans residues E696–D771. The span at E702–D771 shows a compositional bias: basic and acidic residues.

The protein belongs to the polyribonucleotide nucleotidyltransferase family. Mg(2+) is required as a cofactor.

It localises to the cytoplasm. The enzyme catalyses RNA(n+1) + phosphate = RNA(n) + a ribonucleoside 5'-diphosphate. Involved in mRNA degradation. Catalyzes the phosphorolysis of single-stranded polyribonucleotides processively in the 3'- to 5'-direction. The chain is Polyribonucleotide nucleotidyltransferase from Sphingopyxis alaskensis (strain DSM 13593 / LMG 18877 / RB2256) (Sphingomonas alaskensis).